Here is a 203-residue protein sequence, read N- to C-terminus: V-type ATP synthase subunit D (203 aa).

Belongs to the V-ATPase D subunit family.

Functionally, produces ATP from ADP in the presence of a proton gradient across the membrane. This chain is V-type ATP synthase subunit D, found in Streptococcus pneumoniae (strain CGSP14).